The following is a 75-amino-acid chain: Rugosin-LK2 (75 aa).

The first 24 residues, 1 to 24 (MFTMKKSLLFLFFLGTISLSFCEG), serve as a signal peptide directing secretion. Residues 25–40 (ERSADEDDEGEMTEEE) constitute a propeptide that is removed on maturation.

As to expression, expressed by the skin glands.

The protein resides in the secreted. Has antimicrobial activity against Gram-positive bacteria S.aureus ATCC 2592 (MIC=10.0 uM), S.aureus ATCC 43300 (MIC=10.0 uM) and B.subtilis (MIC=30.0 uM), against Gram-negative bacteria E.coli ML-35P (MIC=10.0 uM), P.aeruginosa PA01 (MIC=2.5 uM) and P.aeruginosa ATCC 27853 (MIC=2.5 uM) and against fungus C.albicans ATCC 2002 (MIC=10.0 uM). The sequence is that of Rugosin-LK2 from Limnonectes kuhlii (Kuhl's Creek frog).